Reading from the N-terminus, the 271-residue chain is PA-phosphatase related-family protein DDB_G0284367 (271 aa).

Transmembrane regions (helical) follow at residues 23 to 43 (FLCLGIFVIESVLFNFVIPPF), 68 to 88 (IVPVWLLMLIALGLPMVVFIG), 102 to 122 (AALGLFQAFTITMLFTDILKV), 150 to 170 (FPSGHSSVSFCGMTFLSFYLC), 181 to 201 (GNILKALVCLCPFMISALVAV), and 211 to 231 (FSDILAGSVIGLSIGVFVYFM).

It belongs to the PA-phosphatase related phosphoesterase family.

The protein resides in the membrane. The protein is PA-phosphatase related-family protein DDB_G0284367 of Dictyostelium discoideum (Social amoeba).